The primary structure comprises 188 residues: Large ribosomal subunit protein eL18 (188 aa).

Residues 147–188 (EAEKHFGPAPGVPHSHTKPYVRSKGRKFERARGRRASRAYKN) are disordered. 2 stretches are compositionally biased toward basic residues: residues 161-171 (SHTKPYVRSKG) and 178-188 (RGRRASRAYKN).

It belongs to the eukaryotic ribosomal protein eL18 family.

Its subcellular location is the cytoplasm. The polypeptide is Large ribosomal subunit protein eL18 (rpl-18) (Caenorhabditis elegans).